The primary structure comprises 282 residues: Putative polysaccharide deacetylase YheN (282 aa).

The chain crosses the membrane as a helical span at residues 15 to 35 (LAFKFASLAVLCVLLLLMVIL). In terms of domain architecture, NodB homology spans 85-271 (KTVYLTFDDG…KLKEKGYSFG (187 aa)).

The protein belongs to the polysaccharide deacetylase family.

The protein localises to the cell membrane. The sequence is that of Putative polysaccharide deacetylase YheN (yheN) from Bacillus subtilis (strain 168).